A 210-amino-acid chain; its full sequence is Oxygen-insensitive NADPH nitroreductase (210 aa).

150-155 (GVSLMG) contacts NADP(+).

Belongs to the nitroreductase family.

Functionally, reduction of a variety of nitroaromatic compounds using NADPH as source of reducing equivalents; two electrons are transferred. Capable of reducing metronidazole; inactive RdxA renders the bacterium resistant to this compound. The reduction of metronidazole generates hydroxylamine, a potent mutagen and bactericide. The polypeptide is Oxygen-insensitive NADPH nitroreductase (rdxA) (Helicobacter pylori (strain ATCC 700392 / 26695) (Campylobacter pylori)).